A 537-amino-acid polypeptide reads, in one-letter code: Phosphoenolpyruvate carboxykinase (ATP) (537 aa).

Substrate is bound by residues arginine 61, tyrosine 194, and lysine 200. ATP contacts are provided by residues lysine 200, histidine 219, and 235-243 (GLSGTGKTT). Mn(2+)-binding residues include lysine 200 and histidine 219. Aspartate 256 is a Mn(2+) binding site. Glutamate 284, arginine 322, and threonine 448 together coordinate ATP. Arginine 322 contacts substrate.

It belongs to the phosphoenolpyruvate carboxykinase (ATP) family. Mn(2+) is required as a cofactor.

It is found in the cytoplasm. The enzyme catalyses oxaloacetate + ATP = phosphoenolpyruvate + ADP + CO2. Its pathway is carbohydrate biosynthesis; gluconeogenesis. Involved in the gluconeogenesis. Catalyzes the conversion of oxaloacetate (OAA) to phosphoenolpyruvate (PEP) through direct phosphoryl transfer between the nucleoside triphosphate and OAA. This chain is Phosphoenolpyruvate carboxykinase (ATP), found in Bradyrhizobium sp. (strain BTAi1 / ATCC BAA-1182).